The chain runs to 100 residues: NADH-quinone oxidoreductase subunit K (100 aa).

3 helical membrane-spanning segments follow: residues 4-24 (LFHG…SLIV), 28-48 (ILFI…ALIV), and 60-80 (IMYI…LALL).

It belongs to the complex I subunit 4L family. As to quaternary structure, NDH-1 is composed of 13 different subunits. Subunits NuoA, H, J, K, L, M, N constitute the membrane sector of the complex.

The protein resides in the cell membrane. It catalyses the reaction a quinone + NADH + 5 H(+)(in) = a quinol + NAD(+) + 4 H(+)(out). Its function is as follows. NDH-1 shuttles electrons from NADH, via FMN and iron-sulfur (Fe-S) centers, to quinones in the respiratory chain. The immediate electron acceptor for the enzyme in this species is believed to be ubiquinone. Couples the redox reaction to proton translocation (for every two electrons transferred, four hydrogen ions are translocated across the cytoplasmic membrane), and thus conserves the redox energy in a proton gradient. This is NADH-quinone oxidoreductase subunit K from Buchnera aphidicola subsp. Acyrthosiphon pisum (strain 5A).